The following is a 692-amino-acid chain: 5-taurinomethyluridine-[tRNA] synthase subunit MTO1, mitochondrial (692 aa).

The transit peptide at 1–25 directs the protein to the mitochondrion; that stretch reads MFYLRGCGRWVAASFTKQQFPLVRL. Residues 43-48, V155, S218, and Q407 contribute to the FAD site; that span reads GGGHAG. The residue at position 508 (K508) is an N6-methyllysine. Positions 669–692 are disordered; the sequence is AAMNESPKTDQCLRNADRLQERQL. The span at 683–692 shows a compositional bias: basic and acidic residues; it reads NADRLQERQL.

Belongs to the MnmG family. Homodimer; forms a dimer in the presence of potassium. Interacts with GTPBP3; forms the GTPBP3-MTO1 complex composed of homodimers of GTPBP3 and MTO1. FAD serves as cofactor.

It localises to the mitochondrion. The catalysed reaction is 5,10-methylenetetrahydrofolate + uridine(34) in tRNA + taurine + GTP + A + H2O = 5-taurinomethyluridine(34) in tRNA + 7,8-dihydrofolate + GDP + AH2 + phosphate + H(+). In terms of biological role, component of the GTPBP3-MTO1 complex that catalyzes the 5-taurinomethyluridine (taum(5)U) modification at the 34th wobble position (U34) of mitochondrial tRNAs (mt-tRNAs), which plays a role in mt-tRNA decoding and mitochondrial translation. Taum(5)U formation on mammalian mt-tRNA requires the presence of both GTPBP3-mediated GTPase activity and MTO1 catalytic activity. The chain is 5-taurinomethyluridine-[tRNA] synthase subunit MTO1, mitochondrial (MTO1) from Macaca fascicularis (Crab-eating macaque).